The primary structure comprises 464 residues: Glutamate--tRNA ligase 1 (464 aa).

The 'HIGH' region motif lies at 8 to 18 (PSPTGHLHVGG). The 'KMSKS' region motif lies at 231–235 (PLSKR). Lysine 234 provides a ligand contact to ATP.

It belongs to the class-I aminoacyl-tRNA synthetase family. Glutamate--tRNA ligase type 1 subfamily. As to quaternary structure, monomer.

It is found in the cytoplasm. It carries out the reaction tRNA(Glu) + L-glutamate + ATP = L-glutamyl-tRNA(Glu) + AMP + diphosphate. Functionally, catalyzes the attachment of glutamate to tRNA(Glu) in a two-step reaction: glutamate is first activated by ATP to form Glu-AMP and then transferred to the acceptor end of tRNA(Glu). This is Glutamate--tRNA ligase 1 from Thermotoga petrophila (strain ATCC BAA-488 / DSM 13995 / JCM 10881 / RKU-1).